A 391-amino-acid chain; its full sequence is Zinc finger protein 414 (391 aa).

Positions 1 to 110 are disordered; the sequence is MDEEPSGPSL…RRPPPGKQIP (110 aa). Residues 84–93 show a composition bias toward polar residues; it reads GPTSTVSGTS. C2H2-type zinc fingers lie at residues 109–133, 145–169, and 176–201; these read IPCSSPGCCLSFPSVRDLAQHLRTH, FRCSALSCTETFPNMQELVAHGKLH, and FKCENCLLRIRTHRSLFKHLHVCAEH. Disordered regions lie at residues 201–243, 274–312, and 344–391; these read HAQS…LEPF, LAAAPGPPASSAAVWKKSQGAGGSPRRPQGGSDAPSGHA, and HLED…FSPL. Positions 214-226 are enriched in basic and acidic residues; that stretch reads LDRESPASERPPE. A compositionally biased stretch (pro residues) spans 227–236; that stretch reads SDPAPAPGLP. A compositionally biased stretch (low complexity) spans 274 to 286; that stretch reads LAAAPGPPASSAA. A C2H2-type 4 zinc finger spans residues 326 to 348; sequence YSCMQCAFSTASRPAMTLHLEDH. Residues 353–372 are compositionally biased toward pro residues; it reads PAAPAPGQPRPDAPADPAPL.

It belongs to the krueppel C2H2-type zinc-finger protein family.

It localises to the nucleus. In terms of biological role, may be involved in transcriptional regulation. This chain is Zinc finger protein 414 (ZNF414), found in Bos taurus (Bovine).